The chain runs to 287 residues: Oxaloacetate decarboxylase (287 aa).

Ser50 provides a ligand contact to substrate. Asp88 is a binding site for Mg(2+). Substrate is bound by residues Arg159 and His235.

The protein belongs to the isocitrate lyase family. Oxaloacetate decarboxylase subfamily. Homotetramer; dimer of dimers. Mg(2+) serves as cofactor.

The catalysed reaction is oxaloacetate + H(+) = pyruvate + CO2. Functionally, catalyzes the decarboxylation of oxaloacetate into pyruvate. Seems to play a role in maintaining cellular concentrations of bicarbonate and pyruvate. The protein is Oxaloacetate decarboxylase of Pseudomonas aeruginosa (strain LESB58).